The chain runs to 414 residues: Serine/threonine transporter SstT (414 aa).

The next 8 membrane-spanning stretches (helical) occupy residues 16 to 36 (GSLV…AWIS), 46 to 66 (LGTL…LMLV), 84 to 104 (ILFL…VFSF), 143 to 163 (ALLN…GFAL), 180 to 200 (AVTF…FGLV), 219 to 239 (LVVL…LLVF), 300 to 320 (MAGA…TLGV), and 332 to 352 (VVAS…LLLI).

Belongs to the dicarboxylate/amino acid:cation symporter (DAACS) (TC 2.A.23) family.

It is found in the cell inner membrane. The catalysed reaction is L-serine(in) + Na(+)(in) = L-serine(out) + Na(+)(out). It carries out the reaction L-threonine(in) + Na(+)(in) = L-threonine(out) + Na(+)(out). Its function is as follows. Involved in the import of serine and threonine into the cell, with the concomitant import of sodium (symport system). The polypeptide is Serine/threonine transporter SstT (Salmonella dublin (strain CT_02021853)).